Consider the following 166-residue polypeptide: NAD(P)H-quinone oxidoreductase subunit I, chloroplastic (166 aa).

4Fe-4S ferredoxin-type domains are found at residues 55-84 (GRIH…VDWK) and 95-124 (LNYS…MTEE). [4Fe-4S] cluster contacts are provided by Cys64, Cys67, Cys70, Cys74, Cys104, Cys107, Cys110, and Cys114.

The protein belongs to the complex I 23 kDa subunit family. NDH is composed of at least 16 different subunits, 5 of which are encoded in the nucleus. [4Fe-4S] cluster is required as a cofactor.

Its subcellular location is the plastid. The protein localises to the chloroplast thylakoid membrane. The catalysed reaction is a plastoquinone + NADH + (n+1) H(+)(in) = a plastoquinol + NAD(+) + n H(+)(out). It catalyses the reaction a plastoquinone + NADPH + (n+1) H(+)(in) = a plastoquinol + NADP(+) + n H(+)(out). Functionally, NDH shuttles electrons from NAD(P)H:plastoquinone, via FMN and iron-sulfur (Fe-S) centers, to quinones in the photosynthetic chain and possibly in a chloroplast respiratory chain. The immediate electron acceptor for the enzyme in this species is believed to be plastoquinone. Couples the redox reaction to proton translocation, and thus conserves the redox energy in a proton gradient. In Chaenactis santolinoides (Santolina pincushion), this protein is NAD(P)H-quinone oxidoreductase subunit I, chloroplastic.